A 179-amino-acid polypeptide reads, in one-letter code: Shikimate kinase (179 aa).

ATP is bound at residue 15 to 20; that stretch reads GAGKTS. Threonine 19 is a binding site for Mg(2+). The substrate site is built by aspartate 37, arginine 61, and glycine 83. Arginine 123 is a binding site for ATP. Position 142 (arginine 142) interacts with substrate.

It belongs to the shikimate kinase family. Monomer. The cofactor is Mg(2+).

Its subcellular location is the cytoplasm. The catalysed reaction is shikimate + ATP = 3-phosphoshikimate + ADP + H(+). Its pathway is metabolic intermediate biosynthesis; chorismate biosynthesis; chorismate from D-erythrose 4-phosphate and phosphoenolpyruvate: step 5/7. Catalyzes the specific phosphorylation of the 3-hydroxyl group of shikimic acid using ATP as a cosubstrate. The polypeptide is Shikimate kinase (Coxiella burnetii (strain CbuG_Q212) (Coxiella burnetii (strain Q212))).